Consider the following 191-residue polypeptide: MSRHSRRMRILCLCATTLLMAGSALASEAGGHADGQLKDFLYRLLDFGITFGALYFLLRGPLKRALSARRQRVAEALEQARQMQASAERRFAACRQQLADADAQIAQLTADLKAESALQCQRIEEQARKMADDIRSEATRSAAREIEAARKQLHQEAVRLAMELAEQRLKQQIAPQDQARLVDEYLRKTGE.

A helical transmembrane segment spans residues 7-25; it reads RMRILCLCATTLLMAGSAL.

The protein belongs to the ATPase B chain family. As to quaternary structure, F-type ATPases have 2 components, F(1) - the catalytic core - and F(0) - the membrane proton channel. F(1) has five subunits: alpha(3), beta(3), gamma(1), delta(1), epsilon(1). F(0) has three main subunits: a(1), b(2) and c(10-14). The alpha and beta chains form an alternating ring which encloses part of the gamma chain. F(1) is attached to F(0) by a central stalk formed by the gamma and epsilon chains, while a peripheral stalk is formed by the delta and b chains.

The protein resides in the cell inner membrane. In terms of biological role, f(1)F(0) ATP synthase produces ATP from ADP in the presence of a proton or sodium gradient. F-type ATPases consist of two structural domains, F(1) containing the extramembraneous catalytic core and F(0) containing the membrane proton channel, linked together by a central stalk and a peripheral stalk. During catalysis, ATP synthesis in the catalytic domain of F(1) is coupled via a rotary mechanism of the central stalk subunits to proton translocation. Its function is as follows. Component of the F(0) channel, it forms part of the peripheral stalk, linking F(1) to F(0). This chain is ATP synthase subunit b 1, found in Syntrophotalea carbinolica (strain DSM 2380 / NBRC 103641 / GraBd1) (Pelobacter carbinolicus).